The primary structure comprises 177 residues: Alpha-crystallin B chain (177 aa).

Met1 is subject to N-acetylmethionine. The region spanning 58–166 is the sHSP domain; it reads RMPSWAQTGL…PERSVPISRD (109 aa). His85, His106, Glu108, His113, and His121 together coordinate Zn(2+). The span at 155 to 169 shows a compositional bias: basic and acidic residues; the sequence is DVPERSVPISRDEKP. Residues 155 to 177 form a disordered region; sequence DVPERSVPISRDEKPAVAGPQQK.

This sequence belongs to the small heat shock protein (HSP20) family. As to quaternary structure, heteromer composed of three CRYAA and one CRYAB subunits. Aggregates with homologous proteins, including the small heat shock protein HSPB1, to form large heteromeric complexes. Inter-subunit bridging via zinc ions enhances stability, which is crucial as there is no protein turn over in the lens. Interacts with HSPBAP1 and TTN/titin.

Its function is as follows. May contribute to the transparency and refractive index of the lens. The polypeptide is Alpha-crystallin B chain (CRYAB) (Squalus acanthias (Spiny dogfish)).